The sequence spans 413 residues: ATP phosphoribosyltransferase regulatory subunit (413 aa).

The segment at 1–21 is disordered; it reads MRSRAARKFSTTPGTRDVLPP.

It belongs to the class-II aminoacyl-tRNA synthetase family. HisZ subfamily. Heteromultimer composed of HisG and HisZ subunits.

It localises to the cytoplasm. It functions in the pathway amino-acid biosynthesis; L-histidine biosynthesis; L-histidine from 5-phospho-alpha-D-ribose 1-diphosphate: step 1/9. In terms of biological role, required for the first step of histidine biosynthesis. May allow the feedback regulation of ATP phosphoribosyltransferase activity by histidine. This is ATP phosphoribosyltransferase regulatory subunit from Rubrobacter xylanophilus (strain DSM 9941 / JCM 11954 / NBRC 16129 / PRD-1).